The following is a 142-amino-acid chain: E1B protein, small T-antigen (142 aa).

Belongs to the adenoviridae E1B 19 kDa protein family.

Its subcellular location is the host cell membrane. It localises to the host nucleus envelope. The protein resides in the host nucleus lamina. Functionally, putative adenovirus Bcl-2 homolog that inhibits apoptosis induced by TNF or FAS pathways, as well as p53-mediated apoptosis. Without E1B 19K function, virus production is compromised because of premature death of host cell. Interacts with Bax protein in cell lysates. This Homo sapiens (Human) protein is E1B protein, small T-antigen.